Consider the following 72-residue polypeptide: Translation initiation factor IF-1 (72 aa).

Positions 1-72 (MAKDGVIEVE…NRGRITYRYK (72 aa)) constitute an S1-like domain.

The protein belongs to the IF-1 family. As to quaternary structure, component of the 30S ribosomal translation pre-initiation complex which assembles on the 30S ribosome in the order IF-2 and IF-3, IF-1 and N-formylmethionyl-tRNA(fMet); mRNA recruitment can occur at any time during PIC assembly.

It localises to the cytoplasm. Functionally, one of the essential components for the initiation of protein synthesis. Stabilizes the binding of IF-2 and IF-3 on the 30S subunit to which N-formylmethionyl-tRNA(fMet) subsequently binds. Helps modulate mRNA selection, yielding the 30S pre-initiation complex (PIC). Upon addition of the 50S ribosomal subunit IF-1, IF-2 and IF-3 are released leaving the mature 70S translation initiation complex. In Bifidobacterium adolescentis (strain ATCC 15703 / DSM 20083 / NCTC 11814 / E194a), this protein is Translation initiation factor IF-1.